The sequence spans 503 residues: Cytochrome P450 3A25 (503 aa).

Heme is bound at residue C442.

Belongs to the cytochrome P450 family. Heme is required as a cofactor.

The protein resides in the endoplasmic reticulum membrane. The protein localises to the microsome membrane. The enzyme catalyses an organic molecule + reduced [NADPH--hemoprotein reductase] + O2 = an alcohol + oxidized [NADPH--hemoprotein reductase] + H2O + H(+). Its function is as follows. Cytochromes P450 are a group of heme-thiolate monooxygenases. In liver microsomes, this enzyme is involved in an NADPH-dependent electron transport pathway. It oxidizes a variety of structurally unrelated compounds, including steroids, fatty acids, and xenobiotics. The protein is Cytochrome P450 3A25 (Cyp3a25) of Mus musculus (Mouse).